A 105-amino-acid chain; its full sequence is Synaptic plasticity regulator PANTS (105 aa).

Belongs to the UPF0545 family. As to quaternary structure, interacts with RTN4 isoform A/Nogo-A; the interaction results in enhanced RTN4-mediated inhibition of AMPA receptor clustering. Also interacts with NCAM1, RANBP2 and CCT8. Post-translationally, rapidly degraded by proteolysis following neuronal stimulation, resulting in increased AMPA receptor clustering.

It is found in the synapse. The protein localises to the synaptic cleft. Negatively regulates long-term potentiation and modulates adult synaptic plasticity. Stabilizes the interaction of RTN4 isoform A/Nogo-A with its receptors, inhibiting clustering of postsynaptic AMPA receptors at synaptic sites. Upon neuronal stimulation, degraded at synapses, reducing RTN4 signaling and allowing AMPA receptor clustering at individual synapses. The chain is Synaptic plasticity regulator PANTS from Pongo abelii (Sumatran orangutan).